Reading from the N-terminus, the 261-residue chain is Carbonic anhydrase 1 (261 aa).

Position 2 is an N-acetylalanine (alanine 2). The region spanning 4 to 261 (PDWGYDGENG…LKGRTVKASF (258 aa)) is the Alpha-carbonic anhydrase domain. A disordered region spans residues 22–41 (PIANGNNQSPIDIKTSETKR). Residue histidine 65 is the Proton donor/acceptor of the active site. Zn(2+) is bound by residues histidine 95, histidine 97, and histidine 120. Substrate is bound by residues threonine 200 and 200 to 201 (TH).

The protein belongs to the alpha-carbonic anhydrase family. Requires Zn(2+) as cofactor.

The protein resides in the cytoplasm. It carries out the reaction hydrogencarbonate + H(+) = CO2 + H2O. The enzyme catalyses urea = cyanamide + H2O. With respect to regulation, inhibited by acetazolamide. Functionally, catalyzes the reversible hydration of carbon dioxide. Can hydrate cyanamide to urea. This chain is Carbonic anhydrase 1 (CA1), found in Ovis aries (Sheep).